We begin with the raw amino-acid sequence, 526 residues long: Na(+)/H(+) antiporter NhaB (526 aa).

12 consecutive transmembrane segments (helical) span residues 25 to 45 (ILLFLLINPIAFYLDPFIAGW), 52 to 72 (IFTLAMALKCYPLQPGGLLAI), 89 to 109 (LVANIEVLLLLVFMVAGIYFM), 130 to 164 (LSLAFCLVSAFLSAFLDALTVIAVVISVATGFYAI), 204 to 224 (LMMHAAIGTALGGVCTLVGEP), 242 to 262 (IRMSPVTVPVFICGLLTCVLV), 307 to 327 (IALWLILGLAMHLAAVGLIGL), 350 to 370 (QEALPFTALLAVFFSVVAVII), 391 to 411 (LALFYLANGLLSMVSDNVFVG), 448 to 468 (VATPNGQAAFLFMLTSALAPL), 479 to 499 (MALPYTLVLGLVGFFSVEMLL), and 505 to 525 (WFYQAGWLVLDNVAPAALPVL).

This sequence belongs to the NhaB Na(+)/H(+) (TC 2.A.34) antiporter family.

The protein resides in the cell inner membrane. It catalyses the reaction 2 Na(+)(in) + 3 H(+)(out) = 2 Na(+)(out) + 3 H(+)(in). Na(+)/H(+) antiporter that extrudes sodium in exchange for external protons. The sequence is that of Na(+)/H(+) antiporter NhaB from Aeromonas hydrophila subsp. hydrophila (strain ATCC 7966 / DSM 30187 / BCRC 13018 / CCUG 14551 / JCM 1027 / KCTC 2358 / NCIMB 9240 / NCTC 8049).